The sequence spans 87 residues: U14-lycotoxin-Ls1a (87 aa).

Residues 1 to 20 form the signal peptide; sequence MNSKVFAVLLLLALSTCVLS. Positions 21–66 constitute a WAP domain; it reads EKYCPTPRNTSCKKMNIRNNCCRDSDCTSNAFCCAEPCGNFCHKAS. 5 disulfide bridges follow: C24-C54, C32-C58, C41-C53, C42-C80, and C47-C62.

Belongs to the venom protein 11 family. 01 (wap-1) subfamily. In terms of processing, contains 5 disulfide bonds. As to expression, expressed by the venom gland.

Its subcellular location is the secreted. In terms of biological role, has antibacterial activity. In Lycosa singoriensis (Wolf spider), this protein is U14-lycotoxin-Ls1a.